We begin with the raw amino-acid sequence, 165 residues long: Ubiquitin D (165 aa).

2 Ubiquitin-like domains span residues 6-81 (SCLC…LKVV) and 90-163 (LFLV…CYCI).

The protein belongs to the ubiquitin D family. In terms of assembly, interacts directly with the 26S proteasome. Interacts with NUB1; this interaction facilitates the linking of UBD-conjugated target protein to the proteasome complex and accelerates its own degradation and that of its conjugates. Interacts (via ubiquitin-like 1 domain) with the spindle checkpoint protein MAD2L1 during mitosis. Present in aggresomes of proteasome inhibited cells. Interacts with HDAC6 under proteasome impairment conditions. Forms a thioester with UBA6 in cells stimulated with tumor necrosis factor-alpha (TNFa) and interferon-gamma (IFNg). Interacts with SQSTM1 and TP53/p53. Post-translationally, can be acetylated. As to expression, constitutively expressed in mature dendritic cells and B-cells. Mostly expressed in the reticuloendothelial system (e.g. thymus, spleen), the gastrointestinal system, kidney, lung and prostate gland.

It is found in the nucleus. The protein localises to the cytoplasm. Its function is as follows. Ubiquitin-like protein modifier which can be covalently attached to target proteins and subsequently leads to their degradation by the 26S proteasome, in a NUB1-dependent manner. Conjugation to the target protein is activated by UBA6 via adenylation of its C-terminal glycine. Promotes the expression of the proteasome subunit beta type-9 (PSMB9/LMP2). Regulates TNF-alpha-induced and LPS-mediated activation of the central mediator of innate immunity NF-kappa-B by promoting TNF-alpha-mediated proteasomal degradation of ubiquitinated-I-kappa-B-alpha. Required for TNF-alpha-induced p65 nuclear translocation in renal tubular epithelial cells (RTECs). May be involved in dendritic cell (DC) maturation, the process by which immature dendritic cells differentiate into fully competent antigen-presenting cells that initiate T-cell responses. Mediates mitotic non-disjunction and chromosome instability, in long-term in vitro culture and cancers, by abbreviating mitotic phase and impairing the kinetochore localization of MAD2L1 during the prometaphase stage of the cell cycle. May be involved in the formation of aggresomes when proteasome is saturated or impaired. Mediates apoptosis in a caspase-dependent manner, especially in renal epithelium and tubular cells during renal diseases such as polycystic kidney disease and Human immunodeficiency virus (HIV)-associated nephropathy (HIVAN). This is Ubiquitin D (UBD) from Homo sapiens (Human).